The sequence spans 281 residues: ATP phosphoribosyltransferase (281 aa).

It belongs to the ATP phosphoribosyltransferase family. Long subfamily. Mg(2+) is required as a cofactor.

Its subcellular location is the cytoplasm. The enzyme catalyses 1-(5-phospho-beta-D-ribosyl)-ATP + diphosphate = 5-phospho-alpha-D-ribose 1-diphosphate + ATP. Its pathway is amino-acid biosynthesis; L-histidine biosynthesis; L-histidine from 5-phospho-alpha-D-ribose 1-diphosphate: step 1/9. With respect to regulation, feedback inhibited by histidine. Catalyzes the condensation of ATP and 5-phosphoribose 1-diphosphate to form N'-(5'-phosphoribosyl)-ATP (PR-ATP). Has a crucial role in the pathway because the rate of histidine biosynthesis seems to be controlled primarily by regulation of HisG enzymatic activity. The polypeptide is ATP phosphoribosyltransferase (Corynebacterium diphtheriae (strain ATCC 700971 / NCTC 13129 / Biotype gravis)).